Here is a 285-residue protein sequence, read N- to C-terminus: Probable endonuclease 4 (285 aa).

9 residues coordinate Zn(2+): His-69, His-109, Glu-145, Asp-179, His-182, His-216, Asp-229, His-231, and Glu-261.

It belongs to the AP endonuclease 2 family. The cofactor is Zn(2+).

It carries out the reaction Endonucleolytic cleavage to 5'-phosphooligonucleotide end-products.. Functionally, endonuclease IV plays a role in DNA repair. It cleaves phosphodiester bonds at apurinic or apyrimidinic (AP) sites, generating a 3'-hydroxyl group and a 5'-terminal sugar phosphate. The protein is Probable endonuclease 4 of Salmonella newport (strain SL254).